The chain runs to 445 residues: O-fucosyltransferase 23 (445 aa).

Residues 12–34 (IFSKSVACKCLVLVGIALFYRAL) traverse the membrane as a helical; Signal-anchor for type II membrane protein segment. Asn97 and Asn179 each carry an N-linked (GlcNAc...) asparagine glycan. A substrate-binding site is contributed by 258 to 260 (HMR). Residue Asn294 is glycosylated (N-linked (GlcNAc...) asparagine). Substrate is bound at residue 374 to 375 (TF). A glycan (N-linked (GlcNAc...) asparagine) is linked at Asn424.

Belongs to the glycosyltransferase GT106 family. Expressed in dry pollen grains and germinating pollen grains.

The protein localises to the golgi apparatus membrane. It functions in the pathway glycan metabolism. In terms of biological role, probable protein O-fucosyltransferase required for correct pollen tube penetration through the stigma-style interface. May be involved in protein O-glycosylation events during pollen-pistil interactions. This chain is O-fucosyltransferase 23, found in Arabidopsis thaliana (Mouse-ear cress).